Reading from the N-terminus, the 1146-residue chain is Killer toxin subunits alpha/beta (1146 aa).

Positions 1 to 17 (MNIFYIFLFLLSFVQGL) are cleaved as a signal peptide. Residues 18-29 (EHTHRRGSLVKR) constitute a propeptide that is removed on maturation. LysM domains follow at residues 205–234 (ADQS…QPIC) and 254–303 (KTYK…NLCV). The 57-residue stretch at 316–372 (IAECGPLAPGEKYNAKCPLNACCSEFGFCGLTKDYCDKKSSTTGAPGTDGCFSNCGY) folds into the Chitin-binding type-1 domain. 4 cysteine pairs are disulfide-bonded: Cys-319/Cys-338, Cys-332/Cys-344, Cys-337/Cys-351, and Cys-366/Cys-370. A GH18 domain is found at 383–735 (FKKIAYWLDA…DDTEDPFDEE (353 aa)). Residues Ile-424 and 447 to 450 (GGWD) each bind chitin. Residue Glu-495 is the Proton donor of the active site. Chitin contacts are provided by residues Tyr-496, 562-565 (MTYD), and Trp-707. 5 N-linked (GlcNAc...) asparagine glycosylation sites follow: Asn-771, Asn-858, Asn-868, Asn-876, and Asn-1117.

This sequence belongs to the glycosyl hydrolase 18 family. The killer toxin is composed of three subunits: alpha, beta and gamma. In terms of processing, RF2 is potentially split by membrane-bound basic amino acid-specific peptidase to yield the alpha and beta subunits.

It carries out the reaction Random endo-hydrolysis of N-acetyl-beta-D-glucosaminide (1-&gt;4)-beta-linkages in chitin and chitodextrins.. Functionally, the alpha subunit is a potent exochitinase. Along with the beta subunit it plays a role in the initial interaction of the toxin with sensitive cells and allow the gamma subunit (the active toxin) to gain entry into the cell. The polypeptide is Killer toxin subunits alpha/beta (Kluyveromyces lactis (strain ATCC 8585 / CBS 2359 / DSM 70799 / NBRC 1267 / NRRL Y-1140 / WM37) (Yeast)).